The primary structure comprises 304 residues: UDP-3-O-acyl-N-acetylglucosamine deacetylase (304 aa).

Residues H79, H238, and D242 each contribute to the Zn(2+) site. H265 serves as the catalytic Proton donor.

The protein belongs to the LpxC family. Zn(2+) is required as a cofactor.

It carries out the reaction a UDP-3-O-[(3R)-3-hydroxyacyl]-N-acetyl-alpha-D-glucosamine + H2O = a UDP-3-O-[(3R)-3-hydroxyacyl]-alpha-D-glucosamine + acetate. The protein operates within glycolipid biosynthesis; lipid IV(A) biosynthesis; lipid IV(A) from (3R)-3-hydroxytetradecanoyl-[acyl-carrier-protein] and UDP-N-acetyl-alpha-D-glucosamine: step 2/6. Functionally, catalyzes the hydrolysis of UDP-3-O-myristoyl-N-acetylglucosamine to form UDP-3-O-myristoylglucosamine and acetate, the committed step in lipid A biosynthesis. This Photobacterium profundum (strain SS9) protein is UDP-3-O-acyl-N-acetylglucosamine deacetylase.